Consider the following 394-residue polypeptide: Flavohemoprotein (394 aa).

A Globin domain is found at 1 to 136 (MISQQTIDIV…LANVFITREE (136 aa)). His85 is a binding site for heme b. Active-site charge relay system residues include Tyr95 and Glu135. Positions 147–394 (GGWRGTREFT…YECFGPHKVL (248 aa)) are reductase. In terms of domain architecture, FAD-binding FR-type spans 150-255 (RGTREFTLIE…AAPAGDFFLD (106 aa)). FAD contacts are provided by residues Tyr188 and 204–207 (RQYS). Residue 268 to 273 (GVGLTP) coordinates NADP(+). An FAD-binding site is contributed by 387–390 (CFGP).

The protein belongs to the globin family. Two-domain flavohemoproteins subfamily. It in the C-terminal section; belongs to the flavoprotein pyridine nucleotide cytochrome reductase family. Heme b is required as a cofactor. The cofactor is FAD.

It carries out the reaction 2 nitric oxide + NADPH + 2 O2 = 2 nitrate + NADP(+) + H(+). It catalyses the reaction 2 nitric oxide + NADH + 2 O2 = 2 nitrate + NAD(+) + H(+). Is involved in NO detoxification in an aerobic process, termed nitric oxide dioxygenase (NOD) reaction that utilizes O(2) and NAD(P)H to convert NO to nitrate, which protects the bacterium from various noxious nitrogen compounds. Therefore, plays a central role in the inducible response to nitrosative stress. The sequence is that of Flavohemoprotein from Photobacterium profundum (strain SS9).